The chain runs to 296 residues: MTEWVPLLDNRRQLQIRELIVEATRADGIAPVGEQVLRELRGTGAKHLVAEDGDDVAAFLNLVVPDEAASENATAMAELVVAPAARRRGIGSAMVREALAEGGAGTRVWAHGDLPAAQSLATKLGLVALRRLHQMRRALADLPAIRVDASVTVRHYLGPQDDSDLLRVNNAAFSWHPEQGGWTPGDLADRFAEPWFDPRGLFLAHDVQTAKLLGFHWTKRHLDKPGMGEVYIVGVDPAAQGRGLGHLLTLVGLHHLAGLGLETVLLYVESDNQAALRTYERLGFAVALTDAAYGRA.

N-acetyltransferase domains lie at 1 to 148 (MTEW…IRVD) and 151 to 296 (VTVR…YGRA). E34 serves as a coordination point for 1D-myo-inositol 2-(L-cysteinylamino)-2-deoxy-alpha-D-glucopyranoside. Acetyl-CoA is bound by residues 79–81 (LVV) and 87–92 (RRGIGS). The 1D-myo-inositol 2-(L-cysteinylamino)-2-deoxy-alpha-D-glucopyranoside site is built by E178, K219, and E229. Residues 233–235 (VGV) and 240–246 (QGRGLGH) contribute to the acetyl-CoA site. 1D-myo-inositol 2-(L-cysteinylamino)-2-deoxy-alpha-D-glucopyranoside is bound at residue Y267. Acetyl-CoA is bound at residue 272 to 277 (NQAALR).

The protein belongs to the acetyltransferase family. MshD subfamily. In terms of assembly, monomer.

It carries out the reaction 1D-myo-inositol 2-(L-cysteinylamino)-2-deoxy-alpha-D-glucopyranoside + acetyl-CoA = mycothiol + CoA + H(+). Its function is as follows. Catalyzes the transfer of acetyl from acetyl-CoA to desacetylmycothiol (Cys-GlcN-Ins) to form mycothiol. The sequence is that of Mycothiol acetyltransferase from Mycobacteroides abscessus (strain ATCC 19977 / DSM 44196 / CCUG 20993 / CIP 104536 / JCM 13569 / NCTC 13031 / TMC 1543 / L948) (Mycobacterium abscessus).